Reading from the N-terminus, the 337-residue chain is Visual pigment-like receptor peropsin (337 aa).

Residues M1–N26 are Extracellular-facing. N-linked (GlcNAc...) asparagine glycosylation occurs at N8. A helical transmembrane segment spans residues I27–I49. Residues F50–N61 lie on the Cytoplasmic side of the membrane. The helical transmembrane segment at A62–L87 threads the bilayer. The Extracellular portion of the chain corresponds to Y88–Y101. Cysteines 98 and 175 form a disulfide. A helical transmembrane segment spans residues A102–V121. Over D122–T140 the chain is Cytoplasmic. Residues Y141–A164 traverse the membrane as a helical segment. Residues S165–S188 lie on the Extracellular side of the membrane. A helical membrane pass occupies residues Y189–V212. Topologically, residues T213 to K240 are cytoplasmic. Residues M241–S264 form a helical membrane-spanning segment. Residues F265–P272 lie on the Extracellular side of the membrane. A helical transmembrane segment spans residues P273 to A297. Position 284 is an N6-(retinylidene)lysine (K284). The Cytoplasmic segment spans residues N298–I337.

This sequence belongs to the G-protein coupled receptor 1 family. Opsin subfamily. In terms of tissue distribution, found only in the eye, where it is localized to the retinal pigment epithelium (RPE). In the RPE, it is localized to the microvilli that surround the photoreceptor outer segments.

It is found in the membrane. In terms of biological role, may play a role in rpe physiology either by detecting light directly or by monitoring the concentration of retinoids or other photoreceptor-derived compounds. In Homo sapiens (Human), this protein is Visual pigment-like receptor peropsin (RRH).